The chain runs to 192 residues: Superoxide dismutase [Fe] (192 aa).

Fe cation-binding residues include H27, H74, D157, and H161.

It belongs to the iron/manganese superoxide dismutase family. As to quaternary structure, homodimer. Fe cation is required as a cofactor.

It catalyses the reaction 2 superoxide + 2 H(+) = H2O2 + O2. Functionally, destroys superoxide anion radicals which are normally produced within the cells and which are toxic to biological systems. The polypeptide is Superoxide dismutase [Fe] (sodB) (Bordetella pertussis (strain Tohama I / ATCC BAA-589 / NCTC 13251)).